Consider the following 695-residue polypeptide: tRNA wybutosine-synthesizing protein 4 (695 aa).

S-adenosyl-L-methionine-binding positions include Lys38, Arg88, Gly115, 146-147 (DY), 196-197 (DL), and Glu224. Residue Arg88 is the Proton donor; for both methylation and methoxycarbonylation activities of the active site. Tyr229 functions as the Proton acceptor; for methoxycarbonylation activity in the catalytic mechanism.

The protein belongs to the methyltransferase superfamily. LCMT family.

It localises to the cytoplasm. The protein localises to the mitochondrion. The catalysed reaction is 7-[(3S)-3-amino-3-carboxypropyl]wyosine(37) in tRNA(Phe) + S-adenosyl-L-methionine = 7-[(3S)-(3-amino-3-methoxycarbonyl)propyl]wyosine(37) in tRNA(Phe) + S-adenosyl-L-homocysteine. The enzyme catalyses 7-[(3S)-(3-amino-3-methoxycarbonyl)propyl]wyosine(37) in tRNA(Phe) + S-adenosyl-L-methionine + CO2 = wybutosine(37) in tRNA(Phe) + S-adenosyl-L-homocysteine + 2 H(+). Its pathway is tRNA modification; wybutosine-tRNA(Phe) biosynthesis. S-adenosyl-L-methionine-dependent methyltransferase that acts as a component of the wybutosine biosynthesis pathway. Wybutosine is a hyper modified guanosine with a tricyclic base found at the 3'-position adjacent to the anticodon of eukaryotic phenylalanine tRNA. Catalyzes the final 2 independent reactions, methylation of the alpha-carboxy group of wybutosine-72 to form wybutosine-58, and methoxycarbonylation of alpha-amino group of wybutosine-58 through the fixation of CO(2) to complete wybutosine. The chain is tRNA wybutosine-synthesizing protein 4 (PPM2) from Saccharomyces cerevisiae (strain ATCC 204508 / S288c) (Baker's yeast).